The sequence spans 133 residues: MARLSIAIQGESKMHKTEVDLVPAACVLDELSHTDGQPSERVMPIAILGATELSQDADGVCTTRSPHWDVRAYVDHGIAGTTRASCAIVSPPTMAPLRFSQLSGDLARIVERGCRMPTHSRLISGSANSECLT.

The polypeptide is Nodulation protein K (nodK) (Bradyrhizobium elkanii).